A 248-amino-acid chain; its full sequence is Phosphatidylglycerol--prolipoprotein diacylglyceryl transferase (248 aa).

3 consecutive transmembrane segments (helical) span residues Phe6–Leu26, Ile48–Glu68, and Gly84–Cys104. Arg130 serves as a coordination point for a 1,2-diacyl-sn-glycero-3-phospho-(1'-sn-glycerol). 2 helical membrane-spanning segments follow: residues Gly187–Leu207 and Ile214–Leu234.

The protein belongs to the Lgt family.

It is found in the cell membrane. The catalysed reaction is L-cysteinyl-[prolipoprotein] + a 1,2-diacyl-sn-glycero-3-phospho-(1'-sn-glycerol) = an S-1,2-diacyl-sn-glyceryl-L-cysteinyl-[prolipoprotein] + sn-glycerol 1-phosphate + H(+). It participates in protein modification; lipoprotein biosynthesis (diacylglyceryl transfer). Functionally, catalyzes the transfer of the diacylglyceryl group from phosphatidylglycerol to the sulfhydryl group of the N-terminal cysteine of a prolipoprotein, the first step in the formation of mature lipoproteins. This is Phosphatidylglycerol--prolipoprotein diacylglyceryl transferase from Finegoldia magna (strain ATCC 29328 / DSM 20472 / WAL 2508) (Peptostreptococcus magnus).